Reading from the N-terminus, the 302-residue chain is Nucleotide-binding protein Bcenmc03_2806 (302 aa).

Position 8-15 (8-15) interacts with ATP; the sequence is GISGSGKS. 57–60 contacts GTP; it reads DARS.

Belongs to the RapZ-like family.

Its function is as follows. Displays ATPase and GTPase activities. This is Nucleotide-binding protein Bcenmc03_2806 from Burkholderia orbicola (strain MC0-3).